We begin with the raw amino-acid sequence, 382 residues long: Galactokinase (382 aa).

34 to 37 is a binding site for substrate; the sequence is EHTD. 124–130 lines the ATP pocket; the sequence is GAGLSSS. Mg(2+)-binding residues include Ser130 and Glu162. Residue Asp174 is the Proton acceptor of the active site. Tyr223 provides a ligand contact to substrate.

The protein belongs to the GHMP kinase family. GalK subfamily.

Its subcellular location is the cytoplasm. It carries out the reaction alpha-D-galactose + ATP = alpha-D-galactose 1-phosphate + ADP + H(+). The protein operates within carbohydrate metabolism; galactose metabolism. Catalyzes the transfer of the gamma-phosphate of ATP to D-galactose to form alpha-D-galactose-1-phosphate (Gal-1-P). The protein is Galactokinase of Escherichia coli O127:H6 (strain E2348/69 / EPEC).